The following is a 378-amino-acid chain: MNRIERILEGFDPVSNGLDEDFVLTKLTGMKGCGCKVPRNVLLQLLQTFKTDLVINNDEVDIGLDSCVIPLRHPGLRLVQTTDFFYPLIDDPYIMGRVTCANVLSDLYAMGVSECDNMLMLLAVAIDLNEKQRDIVVPLFIQGFKDAADEAGTKIRGGQTVRCPWLLLGGVATSVAHESEIIKVDQAVPGDVLILTKPIGGQVAVNSYEWIKKKNGKIEELNLEIPKIEKAFKQVCEQMSRLNRNAAKLLHKYDAHSSTDVTGFGLLGHAENLARVQKQPMEFIIEKLPIIEYMDEIADKMIAKGGEGFKLYQGTSAETSGGLLIAMSEENAKKYIAELSSLDNAPAWIIGKVTAKTTDSSIARILPDAVRISVPSHI.

The active site involves Cys33. ATP contacts are provided by residues Lys36, 63-65 (GLD), Asp83, Asp106, and 158-160 (GQT). Asp65 serves as a coordination point for Mg(2+). Asp106 is a binding site for Mg(2+). Position 260 (Asp260) interacts with Mg(2+).

This sequence belongs to the selenophosphate synthase 1 family. Class I subfamily. As to quaternary structure, homodimer. Requires Mg(2+) as cofactor.

The enzyme catalyses hydrogenselenide + ATP + H2O = selenophosphate + AMP + phosphate + 2 H(+). Functionally, synthesizes selenophosphate from selenide and ATP. This chain is Probable selenide, water dikinase (seld-1), found in Caenorhabditis elegans.